The primary structure comprises 495 residues: Aspartyl/glutamyl-tRNA(Asn/Gln) amidotransferase subunit B (495 aa).

The protein belongs to the GatB/GatE family. GatB subfamily. Heterotrimer of A, B and C subunits.

It catalyses the reaction L-glutamyl-tRNA(Gln) + L-glutamine + ATP + H2O = L-glutaminyl-tRNA(Gln) + L-glutamate + ADP + phosphate + H(+). The catalysed reaction is L-aspartyl-tRNA(Asn) + L-glutamine + ATP + H2O = L-asparaginyl-tRNA(Asn) + L-glutamate + ADP + phosphate + 2 H(+). Allows the formation of correctly charged Asn-tRNA(Asn) or Gln-tRNA(Gln) through the transamidation of misacylated Asp-tRNA(Asn) or Glu-tRNA(Gln) in organisms which lack either or both of asparaginyl-tRNA or glutaminyl-tRNA synthetases. The reaction takes place in the presence of glutamine and ATP through an activated phospho-Asp-tRNA(Asn) or phospho-Glu-tRNA(Gln). The protein is Aspartyl/glutamyl-tRNA(Asn/Gln) amidotransferase subunit B of Methylocella silvestris (strain DSM 15510 / CIP 108128 / LMG 27833 / NCIMB 13906 / BL2).